We begin with the raw amino-acid sequence, 187 residues long: MIDKERIKAAVRELLIGIGEDPDREGLLETPDRVARMCEEIFAGLHQDPKSVVKVFQEENHEEMVMVKDIPIYSICEHHLLPFIGVAHVVYIPRKGKIMGLSKLARIVDIIARKPQLQERLGSEVANVIMESINPLGVAVVVEAEHLCMTMRGIKKAGSKTVTSALRGIIKTDARTRAEVMALINGR.

Residues Cys-76, His-79, and Cys-148 each coordinate Zn(2+).

This sequence belongs to the GTP cyclohydrolase I family. In terms of assembly, toroid-shaped homodecamer, composed of two pentamers of five dimers.

It catalyses the reaction GTP + H2O = 7,8-dihydroneopterin 3'-triphosphate + formate + H(+). The protein operates within cofactor biosynthesis; 7,8-dihydroneopterin triphosphate biosynthesis; 7,8-dihydroneopterin triphosphate from GTP: step 1/1. This is GTP cyclohydrolase 1 from Acetivibrio thermocellus (strain ATCC 27405 / DSM 1237 / JCM 9322 / NBRC 103400 / NCIMB 10682 / NRRL B-4536 / VPI 7372) (Clostridium thermocellum).